The following is a 665-amino-acid chain: MTGFQIKAPFEPTGDQPRAIAQLTASLQAEHRFQTLLGATGTGKTHTIARVIEKIGKPTLVLAHNKTLAAQLCNELREFFPNNAVEYFISYYDYYQPEAYIPVTDTYIEKTAAINEEIDMLRHSATRSLFERKDVIVVASISCIYGLGIPSEYLNASVPLQVGIEVDQRQLLRDLTTIQYSRNDLDLGRGRFRVKGDVLEIGPAYEDRIVRVEFFGDEIDAIRYVDPVTGTTLQSLDNLRIYPARHFVTPQERLEIACADIAAELKDRLTELEAQNKLLEAQRLDQRTRYDLEMLREVGYCNGVENYSRHLAGRSPGEPPETLIDYFPKDWLLVVDESHVTVPQIRGMYNGDQSRKRVLIDHGFRLPSAADNRPLKSEEFWQKVTQCIFVSATPGDWELDISEDRIIEQIIRPTGVVDPEIFVRPTTGQVDDLLGEVRDRIERRERVLITTLTKRMAEDLTEYFQDRGVRVRYLHSEIGAIERIEILEDLRKGTFDVLIGVNLLREGLDLPEVSLVAILDADKEGFLRAERSLIQTIGRAARHVRGQAILYADNLTDSMAKAISETERRRAIQTAYNQKHGITPQPIVKKASNAILAFLEVSRRLNAQELDTAYEQADELPLEDIPELITQLEAQMKEAAKKLEFEEAAKYRDRIKQLRDKLLGR.

Residues 25-178 (ASLQAEHRFQ…RQLLRDLTTI (154 aa)) enclose the Helicase ATP-binding domain. 38–45 (GATGTGKT) is an ATP binding site. Residues 91-114 (YYDYYQPEAYIPVTDTYIEKTAAI) carry the Beta-hairpin motif. The 167-residue stretch at 429 to 595 (QVDDLLGEVR…PIVKKASNAI (167 aa)) folds into the Helicase C-terminal domain. Residues 626–661 (PELITQLEAQMKEAAKKLEFEEAAKYRDRIKQLRDK) form the UVR domain.

This sequence belongs to the UvrB family. As to quaternary structure, forms a heterotetramer with UvrA during the search for lesions. Interacts with UvrC in an incision complex.

It is found in the cytoplasm. The UvrABC repair system catalyzes the recognition and processing of DNA lesions. A damage recognition complex composed of 2 UvrA and 2 UvrB subunits scans DNA for abnormalities. Upon binding of the UvrA(2)B(2) complex to a putative damaged site, the DNA wraps around one UvrB monomer. DNA wrap is dependent on ATP binding by UvrB and probably causes local melting of the DNA helix, facilitating insertion of UvrB beta-hairpin between the DNA strands. Then UvrB probes one DNA strand for the presence of a lesion. If a lesion is found the UvrA subunits dissociate and the UvrB-DNA preincision complex is formed. This complex is subsequently bound by UvrC and the second UvrB is released. If no lesion is found, the DNA wraps around the other UvrB subunit that will check the other stand for damage. The protein is UvrABC system protein B of Cyanothece sp. (strain PCC 7425 / ATCC 29141).